A 346-amino-acid polypeptide reads, in one-letter code: Histidinol-phosphate aminotransferase (346 aa).

At K209 the chain carries N6-(pyridoxal phosphate)lysine.

This sequence belongs to the class-II pyridoxal-phosphate-dependent aminotransferase family. Histidinol-phosphate aminotransferase subfamily. As to quaternary structure, homodimer. Pyridoxal 5'-phosphate is required as a cofactor.

The catalysed reaction is L-histidinol phosphate + 2-oxoglutarate = 3-(imidazol-4-yl)-2-oxopropyl phosphate + L-glutamate. It participates in amino-acid biosynthesis; L-histidine biosynthesis; L-histidine from 5-phospho-alpha-D-ribose 1-diphosphate: step 7/9. The protein is Histidinol-phosphate aminotransferase of Flavobacterium psychrophilum (strain ATCC 49511 / DSM 21280 / CIP 103535 / JIP02/86).